A 194-amino-acid polypeptide reads, in one-letter code: RNA pyrophosphohydrolase (194 aa).

The Nudix hydrolase domain occupies 6-149; the sequence is GFRPNVGIIL…KRDVYQRALQ (144 aa). A Nudix box motif is present at residues 38-59; sequence GGIKFGETPEQAMYRELEEEVG. The disordered stretch occupies residues 158–194; the sequence is PTQHVPPQHNTARYLRQTHASRKPDEPSTEKTKPDNE. The span at 179–194 shows a compositional bias: basic and acidic residues; the sequence is RKPDEPSTEKTKPDNE.

Belongs to the Nudix hydrolase family. RppH subfamily. The cofactor is a divalent metal cation.

In terms of biological role, accelerates the degradation of transcripts by removing pyrophosphate from the 5'-end of triphosphorylated RNA, leading to a more labile monophosphorylated state that can stimulate subsequent ribonuclease cleavage. This is RNA pyrophosphohydrolase from Janthinobacterium sp. (strain Marseille) (Minibacterium massiliensis).